A 611-amino-acid chain; its full sequence is mRNA export factor GLE1 (611 aa).

Disordered regions lie at residues serine 69–cysteine 94 and lysine 220–arginine 243. The segment covering aspartate 71 to aspartate 89 has biased composition (acidic residues).

The protein belongs to the GLE1 family. In terms of assembly, part of the nuclear pore complex (NPC). The NPC has an eight-fold symmetrical structure comprising a central transport channel and two rings, the cytoplasmic and nuclear rings, to which eight filaments are attached. The cytoplasmic filaments have loose ends, while the nuclear filaments are joined in a distal ring, forming a nuclear basket. NPCs are highly dynamic in configuration and composition, and can be devided in 3 subcomplexes, the NUP62 subcomplex, the NUP107-160 subcomplex and the NUP93 subcomplex, containing approximately 30 different nucleoporin proteins.

It localises to the nucleus envelope. It is found in the nucleus. The protein localises to the nuclear pore complex. Required for seed viability. The polypeptide is mRNA export factor GLE1 (Arabidopsis thaliana (Mouse-ear cress)).